A 157-amino-acid polypeptide reads, in one-letter code: NudC domain-containing protein 2 (157 aa).

The residue at position 2 (Ser2) is an N-acetylserine. One can recognise a CS domain in the interval 14-104; the sequence is CGTPWGQWYQ…DAANCWTSLL (91 aa). The tract at residues 134–157 is disordered; that stretch reads FDFSGAEISGNYTKGGPDFSNLEK. The residue at position 142 (Ser142) is a Phosphoserine. Tyr145 bears the Phosphotyrosine mark.

In terms of assembly, interacts with LIS1.

The protein localises to the chromosome. Its subcellular location is the centromere. It localises to the kinetochore. It is found in the cytoplasm. The protein resides in the cytoskeleton. The protein localises to the microtubule organizing center. Its subcellular location is the centrosome. It localises to the spindle pole. May regulate the LIS1/dynein pathway by stabilizing LIS1 with Hsp90 chaperone. In Homo sapiens (Human), this protein is NudC domain-containing protein 2 (NUDCD2).